Reading from the N-terminus, the 852-residue chain is DNA repair protein rhp54 (852 aa).

2 short sequence motifs (nuclear localization signal) span residues 35-51 (KKFKCPSLVISEKRKEL) and 178-181 (KRKK). Residues 187–205 (NRKGKKEISDSEPESDHDS) show a composition bias toward basic and acidic residues. Residues 187-208 (NRKGKKEISDSEPESDHDSCVS) are disordered. Residues 281-459 (GRIDRCANGC…FSLLNFANPG (179 aa)) form the Helicase ATP-binding domain. Residue 294-301 (DEMGLGKT) coordinates ATP. The DEGH box signature appears at 410–413 (DEGH). In terms of domain architecture, Helicase C-terminal spans 614-767 (VLERMLYQIK…CVVDEAQDVE (154 aa)).

It belongs to the SNF2/RAD54 helicase family. In terms of assembly, homohexamer. Interacts with rhp51.

The protein localises to the nucleus. The enzyme catalyses ATP + H2O = ADP + phosphate + H(+). Plays an essential role in homologous recombination (HR) which is a major pathway for repairing DNA double-strand breaks (DSBs), single-stranded DNA (ssDNA) gaps, and stalled or collapsed replication forks. Acts as a molecular motor during the homology search and guides RAD51 ssDNA along a donor dsDNA thereby changing the homology search from the diffusion-based mechanism to a motor-guided mechanism. Plays also an essential role in RAD51-mediated synaptic complex formation which consists of three strands encased in a protein filament formed once homology is recognized. Once DNA strand exchange occured, dissociates RAD51 from nucleoprotein filaments formed on dsDNA. The polypeptide is DNA repair protein rhp54 (rhp54) (Schizosaccharomyces pombe (strain 972 / ATCC 24843) (Fission yeast)).